The following is a 369-amino-acid chain: UDP-N-acetylenolpyruvoylglucosamine reductase (369 aa).

In terms of domain architecture, FAD-binding PCMH-type spans 29–202 (VGPIARRVIT…LEVEFALDPS (174 aa)). Arginine 176 is an active-site residue. Serine 257 acts as the Proton donor in catalysis. Glutamate 361 is an active-site residue.

It belongs to the MurB family. Requires FAD as cofactor.

The protein localises to the cytoplasm. It catalyses the reaction UDP-N-acetyl-alpha-D-muramate + NADP(+) = UDP-N-acetyl-3-O-(1-carboxyvinyl)-alpha-D-glucosamine + NADPH + H(+). The protein operates within cell wall biogenesis; peptidoglycan biosynthesis. Its function is as follows. Cell wall formation. In Mycobacterium tuberculosis (strain ATCC 25177 / H37Ra), this protein is UDP-N-acetylenolpyruvoylglucosamine reductase.